Consider the following 147-residue polypeptide: Insertion element IS402 uncharacterized 16.2 kDa protein (147 aa).

The segment at 106-147 (DSSSIRAVGAGQKLGQTPPIARDPVPSTTSSPTPTVRRSPRS) is disordered. Over residues 129–147 (PVPSTTSSPTPTVRRSPRS) the composition is skewed to low complexity.

The protein belongs to the transposase 6 family.

This chain is Insertion element IS402 uncharacterized 16.2 kDa protein, found in Burkholderia cepacia (Pseudomonas cepacia).